Consider the following 485-residue polypeptide: Glutamate--tRNA ligase (485 aa).

The 'HIGH' region motif lies at 11–21 (PSPTGHLHIGN). The 'KMSKS' region motif lies at 252–256 (KLSKR). Lys255 is an ATP binding site.

Belongs to the class-I aminoacyl-tRNA synthetase family. Glutamate--tRNA ligase type 1 subfamily. In terms of assembly, monomer.

It is found in the cytoplasm. The catalysed reaction is tRNA(Glu) + L-glutamate + ATP = L-glutamyl-tRNA(Glu) + AMP + diphosphate. Its function is as follows. Catalyzes the attachment of glutamate to tRNA(Glu) in a two-step reaction: glutamate is first activated by ATP to form Glu-AMP and then transferred to the acceptor end of tRNA(Glu). The chain is Glutamate--tRNA ligase from Bacillus mycoides (strain KBAB4) (Bacillus weihenstephanensis).